A 346-amino-acid chain; its full sequence is Acetylpolyamine amidohydrolase 1 (346 aa).

The active-site Proton donor/acceptor is the H161. Residues D197, H199, and D286 each coordinate Zn(2+).

It belongs to the histone deacetylase family. As to quaternary structure, homodimer. Zn(2+) serves as cofactor.

The catalysed reaction is N-acetylputrescine + H2O = putrescine + acetate. It catalyses the reaction N-acetylcadaverine + H2O = cadaverine + acetate. It carries out the reaction N(1)-acetylspermine + H2O = spermine + acetate. The enzyme catalyses N(1)-acetylspermidine + H2O = spermidine + acetate. It participates in amine and polyamine metabolism. In terms of biological role, catalyzes the deacetylation of acetylated polyamines such as N-acetylputrescine, N-acetylcadaverine, N(1)-acetylspermine and N(1)-acetylspermidine. Plays an important role in the metabolism of acetylated polyamines in P.aeruginosa. Is involved in the degradation pathways of N-acetylputrescine and N-acetylcadaverine, that allow P.aeruginosa to utilize these acetylpolyamines as a carbon source under glucose starvation. In vitro, can also hydrolyze artificial trifluoroacetylated and acetylated lysine-derivatives. The polypeptide is Acetylpolyamine amidohydrolase 1 (Pseudomonas aeruginosa (strain ATCC 15692 / DSM 22644 / CIP 104116 / JCM 14847 / LMG 12228 / 1C / PRS 101 / PAO1)).